Consider the following 299-residue polypeptide: Homoserine kinase (299 aa).

84 to 94 contacts ATP; that stretch reads PISRGLGSSSA.

This sequence belongs to the GHMP kinase family. Homoserine kinase subfamily.

It localises to the cytoplasm. The catalysed reaction is L-homoserine + ATP = O-phospho-L-homoserine + ADP + H(+). The protein operates within amino-acid biosynthesis; L-threonine biosynthesis; L-threonine from L-aspartate: step 4/5. Catalyzes the ATP-dependent phosphorylation of L-homoserine to L-homoserine phosphate. The polypeptide is Homoserine kinase (Helicobacter hepaticus (strain ATCC 51449 / 3B1)).